The sequence spans 479 residues: Ribulose bisphosphate carboxylase large chain (479 aa).

Residues 1–2 constitute a propeptide that is removed on maturation; that stretch reads MS. Substrate-binding residues include Asn123 and Thr173. Catalysis depends on Lys175, which acts as the Proton acceptor. Lys177 serves as a coordination point for substrate. The Mg(2+) site is built by Lys201, Asp203, and Glu204. An N6-carboxylysine modification is found at Lys201. A Phosphoserine modification is found at Ser208. Residue His294 is the Proton acceptor of the active site. Substrate contacts are provided by Arg295 and His327. At Thr330 the chain carries Phosphothreonine. Ser379 contributes to the substrate binding site.

The protein belongs to the RuBisCO large chain family. Type I subfamily. In terms of assembly, heterohexadecamer of 8 large chains and 8 small chains; disulfide-linked. The disulfide link is formed within the large subunit homodimers. Requires Mg(2+) as cofactor. Post-translationally, the disulfide bond which can form in the large chain dimeric partners within the hexadecamer appears to be associated with oxidative stress and protein turnover.

The protein resides in the plastid. It is found in the chloroplast. The catalysed reaction is 2 (2R)-3-phosphoglycerate + 2 H(+) = D-ribulose 1,5-bisphosphate + CO2 + H2O. It catalyses the reaction D-ribulose 1,5-bisphosphate + O2 = 2-phosphoglycolate + (2R)-3-phosphoglycerate + 2 H(+). In terms of biological role, ruBisCO catalyzes two reactions: the carboxylation of D-ribulose 1,5-bisphosphate, the primary event in carbon dioxide fixation, as well as the oxidative fragmentation of the pentose substrate in the photorespiration process. Both reactions occur simultaneously and in competition at the same active site. The sequence is that of Ribulose bisphosphate carboxylase large chain from Brassica oleracea (Wild cabbage).